The primary structure comprises 213 residues: Probable nicotinate-nucleotide adenylyltransferase (213 aa).

Belongs to the NadD family.

It catalyses the reaction nicotinate beta-D-ribonucleotide + ATP + H(+) = deamido-NAD(+) + diphosphate. It participates in cofactor biosynthesis; NAD(+) biosynthesis; deamido-NAD(+) from nicotinate D-ribonucleotide: step 1/1. Its function is as follows. Catalyzes the reversible adenylation of nicotinate mononucleotide (NaMN) to nicotinic acid adenine dinucleotide (NaAD). This is Probable nicotinate-nucleotide adenylyltransferase from Trichlorobacter lovleyi (strain ATCC BAA-1151 / DSM 17278 / SZ) (Geobacter lovleyi).